Reading from the N-terminus, the 248-residue chain is Small ribosomal subunit protein uS2 (248 aa).

The protein belongs to the universal ribosomal protein uS2 family.

The chain is Small ribosomal subunit protein uS2 from Janthinobacterium sp. (strain Marseille) (Minibacterium massiliensis).